The following is a 212-amino-acid chain: Phosphatidylserine decarboxylase proenzyme (212 aa).

The active-site Schiff-base intermediate with substrate; via pyruvic acid is S182. Residue S182 is modified to Pyruvic acid (Ser); by autocatalysis.

Belongs to the phosphatidylserine decarboxylase family. PSD-A subfamily. In terms of assembly, heterodimer of a large membrane-associated beta subunit and a small pyruvoyl-containing alpha subunit. Requires pyruvate as cofactor. Is synthesized initially as an inactive proenzyme. Formation of the active enzyme involves a self-maturation process in which the active site pyruvoyl group is generated from an internal serine residue via an autocatalytic post-translational modification. Two non-identical subunits are generated from the proenzyme in this reaction, and the pyruvate is formed at the N-terminus of the alpha chain, which is derived from the carboxyl end of the proenzyme. The post-translation cleavage follows an unusual pathway, termed non-hydrolytic serinolysis, in which the side chain hydroxyl group of the serine supplies its oxygen atom to form the C-terminus of the beta chain, while the remainder of the serine residue undergoes an oxidative deamination to produce ammonia and the pyruvoyl prosthetic group on the alpha chain.

Its subcellular location is the cell membrane. It catalyses the reaction a 1,2-diacyl-sn-glycero-3-phospho-L-serine + H(+) = a 1,2-diacyl-sn-glycero-3-phosphoethanolamine + CO2. The protein operates within phospholipid metabolism; phosphatidylethanolamine biosynthesis; phosphatidylethanolamine from CDP-diacylglycerol: step 2/2. In terms of biological role, catalyzes the formation of phosphatidylethanolamine (PtdEtn) from phosphatidylserine (PtdSer). The chain is Phosphatidylserine decarboxylase proenzyme from Chlorobium limicola (strain DSM 245 / NBRC 103803 / 6330).